A 43-amino-acid chain; its full sequence is Protein PsbN (43 aa).

Residues 5 to 27 (TLVAISISGLLVSFTGYALYTAF) traverse the membrane as a helical segment.

It belongs to the PsbN family.

Its subcellular location is the plastid. The protein resides in the chloroplast thylakoid membrane. In terms of biological role, may play a role in photosystem I and II biogenesis. The sequence is that of Protein PsbN from Eucalyptus globulus subsp. globulus (Tasmanian blue gum).